Consider the following 236-residue polypeptide: Small ribosomal subunit protein eS6 (236 aa).

Phosphoserine occurs at positions 232 and 233.

This sequence belongs to the eukaryotic ribosomal protein eS6 family. Post-translationally, phosphorylated.

The chain is Small ribosomal subunit protein eS6 (RPS6A) from Candida glabrata (strain ATCC 2001 / BCRC 20586 / JCM 3761 / NBRC 0622 / NRRL Y-65 / CBS 138) (Yeast).